We begin with the raw amino-acid sequence, 354 residues long: Macrosialin (354 aa).

The N-terminal stretch at Met1 to Gly21 is a signal peptide. Residues Asn22–Ser319 are Extracellular-facing. The mucin-like stretch occupies residues Asp23–Pro140. Positions Pro40–His51 are enriched in low complexity. Residues Pro40–Trp162 are disordered. The segment covering Arg52 to Thr61 has biased composition (basic residues). Low complexity predominate over residues His62 to Thr84. Repeat copies occupy residues Thr70–Ala99 and Thr100–Ala129. The segment at Thr70–Ala129 is 2 X 30 AA tandem repeats. The segment covering Ser85–Gln102 has biased composition (polar residues). 2 N-linked (GlcNAc...) asparagine glycosylation sites follow: Asn88 and Asn96. Residues Gly103–Gly117 show a composition bias toward low complexity. Residues Asn118 and Asn126 are each glycosylated (N-linked (GlcNAc...) asparagine). Residues Val121–Thr135 show a composition bias toward polar residues. Positions Pro140–Ser150 are enriched in pro residues. N-linked (GlcNAc...) asparagine glycans are attached at residues Asn164, Asn199, Asn246, Asn261, and Asn279. Cys169 and Cys207 form a disulfide bridge. Cysteines 277 and 314 form a disulfide. The chain crosses the membrane as a helical span at residues Ile320–Ile344. At Arg345–Leu354 the chain is on the cytoplasmic side.

Belongs to the LAMP family. Post-translationally, N- and O-glycosylated. In terms of tissue distribution, highly expressed by blood monocytes and tissue macrophages. Also expressed in lymphocytes, fibroblasts and endothelial cells. Expressed in many tumor cell lines which could allow them to attach to selectins on vascular endothelium, facilitating their dissemination to secondary sites.

The protein localises to the cell membrane. Its subcellular location is the endosome membrane. The protein resides in the lysosome membrane. Its function is as follows. Could play a role in phagocytic activities of tissue macrophages, both in intracellular lysosomal metabolism and extracellular cell-cell and cell-pathogen interactions. Binds to tissue- and organ-specific lectins or selectins, allowing homing of macrophage subsets to particular sites. Rapid recirculation of CD68 from endosomes and lysosomes to the plasma membrane may allow macrophages to crawl over selectin-bearing substrates or other cells. This chain is Macrosialin (CD68), found in Homo sapiens (Human).